The sequence spans 294 residues: Osteopontin (294 aa).

An N-terminal signal peptide occupies residues 1–16 (MRLAVICFCLFGIASS). Phosphoserine is present on residues Ser-24, Ser-26, Ser-27, Ser-61, Ser-62, Ser-75, Ser-77, Ser-80, Ser-106, Ser-109, Ser-112, Ser-115, and Ser-118. Residues 42–274 (WLVPDPSQKQ…LVLDPKSKED (233 aa)) are disordered. Over residues 48 to 61 (SQKQNLLAPQNAVS) the composition is skewed to polar residues. The span at 85–110 (DDDDDDDDDDGDHAESEDSVDSDESD) shows a compositional bias: acidic residues. The segment covering 121–130 (TVTASTQADT) has biased composition (polar residues). Thr-123, Thr-132, and Thr-137 each carry an O-linked (GalNAc...) threonine glycan. The short motif at 144–146 (RGD) is the Cell attachment site element. Residues Thr-170 and Thr-175 each carry the phosphothreonine modification. Residues 174–187 (LTSHMKSGESKESL) are compositionally biased toward basic and acidic residues. Phosphoserine is present on residues Ser-176, Ser-180, Ser-200, Ser-209, Ser-213, and Ser-219. The span at 197 to 216 (SMPSDQDNNGKGSHESSQLD) shows a compositional bias: polar residues. The O-linked (Xyl...) (chondroitin sulfate) serine glycan is linked to Ser-219. Basic and acidic residues predominate over residues 220–232 (LETHRLEHSKESQ). Thr-222 is modified (phosphothreonine). Phosphoserine occurs at positions 228, 231, 234, 238, 243, 247, 250, 255, 260, 271, 283, 288, 290, and 291. Residues 234–249 (SADQSDVIDSQASSKA) are compositionally biased toward polar residues. Over residues 263–274 (DKLVLDPKSKED) the composition is skewed to basic and acidic residues. Residue Ser-288 is glycosylated (O-linked (Xyl...) (chondroitin sulfate) serine).

Belongs to the osteopontin family. In terms of assembly, interacts (via N-terminus) with integrin ITGA9:ITGB1. Post-translationally, extensively phosphorylated by FAM20C in the extracellular medium at multiple sites within the S-x-E/pS motif. The phosphorylated form inhibits hydroxyapatite crystallization. Dephosphorylation via a mechanism involving ALPL/TNAP promotes hydroxyapatite crystallization. In terms of processing, O-glycosylated. Forms covalent cross-links mediated by transglutaminase TGM2, between a glutamine and the epsilon-amino group of a lysine residue, forming homopolymers and heteropolymers, increasing its collagen binding properties.

It localises to the secreted. Functionally, major non-collagenous bone protein that binds tightly to hydroxyapatite. Appears to form an integral part of the mineralized matrix. Probably important to cell-matrix interaction. Acts as a cytokine involved in enhancing production of interferon-gamma and interleukin-12 and reducing production of interleukin-10 and is essential in the pathway that leads to type I immunity. The polypeptide is Osteopontin (Spp1) (Mus musculus (Mouse)).